The chain runs to 422 residues: Probable alpha-1,6-mannosyltransferase MNN11 (422 aa).

At 1–31 (MAIKPRTKGKTYSSRSVGSQWFNRLGFKQNK) the chain is on the cytoplasmic side. A helical; Signal-anchor for type II membrane protein membrane pass occupies residues 32–52 (YGTCKFLSIITAFVFILYFFS). Topologically, residues 53 to 422 (NRFYPISRSA…GHMYQKIKKS (370 aa)) are lumenal.

This sequence belongs to the glycosyltransferase 34 family. In terms of assembly, component of the M-Pol II complex composed of ANP1, MNN9, MNN10, MNN11 and HOC1.

The protein localises to the golgi apparatus. It localises to the cis-Golgi network membrane. Functionally, required for synthesis of full-length mannan chains. In terms of biological role, the M-Pol II complex possesses alpha-1,6-mannosyltransferase activity and is probably involved in the elongation of the mannan backbone of N-linked glycans on cell wall and periplasmic proteins. This Saccharomyces cerevisiae (strain ATCC 204508 / S288c) (Baker's yeast) protein is Probable alpha-1,6-mannosyltransferase MNN11 (MNN11).